Here is a 231-residue protein sequence, read N- to C-terminus: MKRADFCIIGLGRFGMQVAHSLKENNFTLVLIDNDQHKTNTAAQEFDHVVCCDGSNLTALAELQLEEFSAVIVGVTNIEASIMICANLRELGQKNIIARAKNEVHNRVLRTMGIREALIPEKIVGKNLVIRLIHGMETEIINLGNDILFVRAPVNNKKLFNRTLGEINIREHTNANLISIMRNGKDVVFPLGPNTQIQPGDVITAVCQLSGVNQYLRYINPNDKNKYKASE.

The 117-residue stretch at Arg3–Ile119 folds into the RCK N-terminal domain. The region spanning His134 to Pro221 is the RCK C-terminal domain.

This is an uncharacterized protein from Mycoplasma pneumoniae (strain ATCC 29342 / M129 / Subtype 1) (Mycoplasmoides pneumoniae).